The sequence spans 49 residues: Large ribosomal subunit protein bL33B (49 aa).

It belongs to the bacterial ribosomal protein bL33 family.

In Staphylococcus saprophyticus subsp. saprophyticus (strain ATCC 15305 / DSM 20229 / NCIMB 8711 / NCTC 7292 / S-41), this protein is Large ribosomal subunit protein bL33B.